The primary structure comprises 555 residues: Carboxylesterase patB (555 aa).

The N-terminal stretch at 1–16 is a signal peptide; sequence MLFTASLLLLLPWASA. N-linked (GlcNAc...) asparagine glycosylation is found at Asn37 and Asn75. Ser258 functions as the Acyl-ester intermediate in the catalytic mechanism. A substrate-binding site is contributed by Ser258. N-linked (GlcNAc...) asparagine glycosylation is present at Asn311. Glu380 (charge relay system) is an active-site residue. N-linked (GlcNAc...) asparagine glycans are attached at residues Asn388 and Asn491.

The protein belongs to the type-B carboxylesterase/lipase family.

It is found in the cytoplasm. It localises to the cytosol. It catalyses the reaction a carboxylic ester + H2O = an alcohol + a carboxylate + H(+). The protein operates within mycotoxin biosynthesis; patulin biosynthesis. In terms of biological role, carboxylesterase; part of the gene cluster that mediates the biosynthesis of patulin, an acetate-derived tetraketide mycotoxin produced by several fungal species that shows antimicrobial properties against several bacteria. The function of patB in patulin synthesis has still to be characterized. The pathway begins with the synthesis of 6-methylsalicylic acid by the polyketide synthase (PKS) patK via condensation of acetate and malonate units. The 6-methylsalicylic acid decarboxylase patG then catalyzes the decarboxylation of 6-methylsalicylic acid to yield m-cresol (also known as 3-methylphenol). These first reactions occur in the cytosol. The intermediate m-cresol is then transported into the endoplasmic reticulum where the cytochrome P450 monooxygenase patH converts it to m-hydroxybenzyl alcohol, which is further converted to gentisyl alcohol by the cytochrome P450 monooxygenase patI. The oxidoreductases patJ and patO further convert gentisyl alcohol to isoepoxydon in the vacuole. PatN catalyzes then the transformation of isoepoxydon into phyllostine. The cluster protein patF is responsible for the conversion from phyllostine to neopatulin whereas the alcohol dehydrogenase patD converts neopatulin to E-ascladiol. The steps between isoepoxydon and E-ascladiol occur in the cytosol, and E-ascladiol is probably secreted to the extracellular space by one of the cluster-specific transporters patC or patM. Finally, the secreted patulin synthase patE catalyzes the conversion of E-ascladiol to patulin. This Aspergillus clavatus (strain ATCC 1007 / CBS 513.65 / DSM 816 / NCTC 3887 / NRRL 1 / QM 1276 / 107) protein is Carboxylesterase patB.